The chain runs to 315 residues: MIRIGTRGSLLATTQAGGVRDALIARGHPAELVTITTAGDRSSGPIESLGVGVFTTALREAIEEGRVDAAVHSHKDLPTADDPRFAVAAIPARNDPRDAVVARDGLVLAELPPGSLVGTSSPRRAAQLRALGLGLEIRPLRGNLDTRLNRVSSGDLDAIVVARAGLARLGRLGDVTETLEPVQMLPAPAQGALAVECRAGDSRLAAVLAELDDADTRASVTAERALLAELEAGCSAPVGAIAEVVESIDEDGRIFEELSLRGCVAALDGSDVIRASGIGTPGRARELGLSVAAELFELGARELMSGARHDPARGN.

Cys-234 is subject to S-(dipyrrolylmethanemethyl)cysteine.

This sequence belongs to the HMBS family. Monomer. It depends on dipyrromethane as a cofactor.

It catalyses the reaction 4 porphobilinogen + H2O = hydroxymethylbilane + 4 NH4(+). It functions in the pathway porphyrin-containing compound metabolism; protoporphyrin-IX biosynthesis; coproporphyrinogen-III from 5-aminolevulinate: step 2/4. Its function is as follows. Tetrapolymerization of the monopyrrole PBG into the hydroxymethylbilane pre-uroporphyrinogen in several discrete steps. This is Porphobilinogen deaminase from Mycolicibacterium paratuberculosis (strain ATCC BAA-968 / K-10) (Mycobacterium paratuberculosis).